The chain runs to 348 residues: Noscapine synthase SDR1 (348 aa).

Belongs to the NAD(P)-dependent epimerase/dehydratase family.

The catalysed reaction is narcotine hemiacetal + NAD(+) = noscapine + NADH + H(+). The protein operates within alkaloid biosynthesis. Oxidoreductase that catalyzes the last step in the biosynthesis of the benzylisoquinoline alkaloid noscapine. Converts narcotine hemiacetal to noscapine. This Papaver somniferum (Opium poppy) protein is Noscapine synthase SDR1.